We begin with the raw amino-acid sequence, 279 residues long: Zinc finger AN1 and C2H2 domain-containing stress-associated protein 11 (279 aa).

2 AN1-type zinc fingers span residues 7–55 and 95–145; these read PDLG…REDV and ATKK…KLPF. Zn(2+) contacts are provided by cysteine 13, cysteine 18, cysteine 28, cysteine 31, cysteine 36, histidine 39, histidine 45, cysteine 47, cysteine 101, cysteine 106, cysteine 118, cysteine 121, cysteine 126, histidine 129, histidine 135, and cysteine 137. A disordered region spans residues 152–178; sequence STTRKEAKTTRPNKAHPSTSSSSSSSR. The segment covering 169-178 has biased composition (low complexity); the sequence is STSSSSSSSR. 2 C2H2-type zinc fingers span residues 213 to 236 and 250 to 273; these read EVCPQCGAKFSSVTSLVEHVEKTH and DVCPRCSRGFRDPVDLVNHIERDH.

Its function is as follows. May be involved in environmental stress response. This chain is Zinc finger AN1 and C2H2 domain-containing stress-associated protein 11 (SAP11), found in Arabidopsis thaliana (Mouse-ear cress).